Consider the following 244-residue polypeptide: Probable ABC transporter ATP-binding protein p29 (244 aa).

The 236-residue stretch at 6–241 folds into the ABC transporter domain; sequence LVFDQVSLRY…KLTKQKLMQI (236 aa). 38–45 provides a ligand contact to ATP; that stretch reads GKSGVGKT.

The protein belongs to the ABC transporter superfamily.

Part of a high-affinity transport system. This Mycoplasma pneumoniae (strain ATCC 29342 / M129 / Subtype 1) (Mycoplasmoides pneumoniae) protein is Probable ABC transporter ATP-binding protein p29 (p29).